The primary structure comprises 369 residues: MAESQEFAELWERNLISTQEAGTCWELINDEYLPSSFDPNIFDNVLTEQPQPSTSPPTASVPVATDYPGEHGFKLGFPQSGTAKSVTCTYSSDLNKLFCQLAKTCPVQMVVNVAPPQGSVIRATAIYKKSEHVAEVVRRCPHHERTPDGDGLAPAAHLIRVEGNSRALYREDDVNSRHSVVVPYEVPQLGSEFTTVLYNFMCNSSCMGGMNRRPILTIISLETHDGQLLGRRSFEVRVCACPGRDRKTEESNFRKDQETKTLDKIPSANKRSLTKDSTSSVPRPEGSKKAKLSGSSDEEIYTLQVRGKERYEMLKKINDSLELSDVVPPSEMDRYRQKLLTKGKKKDGQTPEPKRGKKLMVKDEKSDSD.

A transcription activation (acidic) region spans residues 1-28; that stretch reads MAESQEFAELWERNLISTQEAGTCWELI. The DNA-binding element occupies 66–256; that stretch reads DYPGEHGFKL…KTEESNFRKD (191 aa). The Zn(2+) site is built by cysteine 140, histidine 143, cysteine 202, and cysteine 206. The tract at residues 237–244 is interaction with DNA; sequence RVCACPGR. Residues 246–263 show a composition bias toward basic and acidic residues; that stretch reads RKTEESNFRKDQETKTLD. Disordered stretches follow at residues 246 to 296 and 318 to 369; these read RKTE…SGSS and NDSL…SDSD. The span at 269-281 shows a compositional bias: polar residues; that stretch reads NKRSLTKDSTSSV. Positions 270–289 match the Bipartite nuclear localization signal motif; sequence KRSLTKDSTSSVPRPEGSKK. Residues 298–329 are oligomerization; it reads EEIYTLQVRGKERYEMLKKINDSLELSDVVPP. Positions 312 to 323 match the Nuclear export signal motif; sequence EMLKKINDSLEL. The segment at 342–365 is basic (repression of DNA-binding); sequence KGKKKDGQTPEPKRGKKLMVKDEK. Residues 346–369 are compositionally biased toward basic and acidic residues; that stretch reads KDGQTPEPKRGKKLMVKDEKSDSD.

Belongs to the p53 family. As to quaternary structure, binds DNA as a homotetramer. The cofactor is Zn(2+).

The protein resides in the cytoplasm. It localises to the nucleus. Multifunctional transcription factor that induces cell cycle arrest, DNA repair or apoptosis upon binding to its target DNA sequence. Acts as a tumor suppressor in many tumor types; induces growth arrest or apoptosis depending on the physiological circumstances and cell type. Negatively regulates cell division by controlling expression of a set of genes required for this process. One of the activated genes is an inhibitor of cyclin-dependent kinases. Apoptosis induction seems to be mediated either by stimulation of BAX and FAS antigen expression, or by repression of Bcl-2 expression. The protein is Cellular tumor antigen p53 (tp53) of Barbus barbus (Barbel).